Reading from the N-terminus, the 454-residue chain is Bifunctional protein GlmU (454 aa).

The tract at residues 1-228 (MSLKVIILAA…EMEVLGVNNK (228 aa)) is pyrophosphorylase. UDP-N-acetyl-alpha-D-glucosamine contacts are provided by residues 8-11 (LAAG), K22, Q73, 78-79 (GT), 100-102 (YGD), G138, E153, N168, and N226. A Mg(2+)-binding site is contributed by D102. N226 contacts Mg(2+). Residues 229-249 (SQLQSLERQYQAQLAEELMEQ) form a linker region. The tract at residues 250-454 (GVTVLDASRI…IKGWQKPTKN (205 aa)) is N-acetyltransferase. Residues R332 and K350 each contribute to the UDP-N-acetyl-alpha-D-glucosamine site. H362 acts as the Proton acceptor in catalysis. UDP-N-acetyl-alpha-D-glucosamine is bound by residues Y365 and N376. Residues A379, 385-386 (NY), S404, A422, and R439 contribute to the acetyl-CoA site.

This sequence in the N-terminal section; belongs to the N-acetylglucosamine-1-phosphate uridyltransferase family. It in the C-terminal section; belongs to the transferase hexapeptide repeat family. As to quaternary structure, homotrimer. Mg(2+) is required as a cofactor.

It localises to the cytoplasm. It carries out the reaction alpha-D-glucosamine 1-phosphate + acetyl-CoA = N-acetyl-alpha-D-glucosamine 1-phosphate + CoA + H(+). The catalysed reaction is N-acetyl-alpha-D-glucosamine 1-phosphate + UTP + H(+) = UDP-N-acetyl-alpha-D-glucosamine + diphosphate. Its pathway is nucleotide-sugar biosynthesis; UDP-N-acetyl-alpha-D-glucosamine biosynthesis; N-acetyl-alpha-D-glucosamine 1-phosphate from alpha-D-glucosamine 6-phosphate (route II): step 2/2. It functions in the pathway nucleotide-sugar biosynthesis; UDP-N-acetyl-alpha-D-glucosamine biosynthesis; UDP-N-acetyl-alpha-D-glucosamine from N-acetyl-alpha-D-glucosamine 1-phosphate: step 1/1. The protein operates within bacterial outer membrane biogenesis; LPS lipid A biosynthesis. Its function is as follows. Catalyzes the last two sequential reactions in the de novo biosynthetic pathway for UDP-N-acetylglucosamine (UDP-GlcNAc). The C-terminal domain catalyzes the transfer of acetyl group from acetyl coenzyme A to glucosamine-1-phosphate (GlcN-1-P) to produce N-acetylglucosamine-1-phosphate (GlcNAc-1-P), which is converted into UDP-GlcNAc by the transfer of uridine 5-monophosphate (from uridine 5-triphosphate), a reaction catalyzed by the N-terminal domain. The sequence is that of Bifunctional protein GlmU from Hydrogenovibrio crunogenus (strain DSM 25203 / XCL-2) (Thiomicrospira crunogena).